The sequence spans 1171 residues: MYELNNFRSIKIALASPEKIRQWSKGEVKKPETINYRTLKPEKEGLFCEKIFGPTRDWECHCGKYKRVRYKGVVCDRCGVEVTKSKVRRERMGHIELAAPVSHIWYFKGIPSRMGLLLDMSPRSLEKVLYFAAYIVINPGETPLTEKQILTEKEYADAIEKYGPKFKAGMGAEAVKGLLESIDLDAMNIELRHKLKESTGQKRIRTVRRLEVVEAFRKSKNNPAWMILDVVPVIPPDLRPMVQLDGGRFATSDLNDLYRRVINRNNRLKRLLDLGAPDIIVRNEKRMLQEAVDALIDNGRRGKPVTGPGNRPLKSLSDMLKGKQGRFRQNLLGKRVDYSGRSVIVVGPELKFYQCGLPKQMALELFKPFVMKKLVQENYAHNIKSAKRMVEKVKPEVWGVLEEVISQHPVLLNRAPTLHRLGIQAFEPILVEGKAIKLHPLVCTAYNADFDGDQMAVHVPLSVEAQAESRFLMLSINNILAPKDGEPITTPTQDMVLGCYYLTIQDEGVLGEGTIFKDFEELLLAYETKAVSLHAKVKVRMKLSAEDSGKLVESTVGRFIFNEKIPQDLGFVDRSKDLYALEVDFLCTKGALGKVIGKCFRKHGNTITSIMLDYIKELGFKYSTRGAITVAVSDMDVPEAKAELISQAEQRVDKYEKAFRRGLISDEERYEKVIETWTETTEKVTDALMAGLDRFNNIFIMADSGARGSKNQIRQLGGMRGLMANASGHTVEIPIKSNFREGLTVLEYFTSTHGARKGLADTALRTADSGYLTRRLVDVSQDVIIRELDCGTETGIVAKAFKDGNEVIEELYFRIVGRHSIDDIIHPETKKVIVPKGDIIFEDAAETITEAGIEKVAIRSALACRSKHGVCGTCYGRNLATGEPVKVGEAVGIIAAQSIGEPGTQLTMRTFHTGGVAGSDITQGLPRVEELFEARKPKGLAIISEISGKVDISESKRKREVTVTDENQEVVTYTIPYGSRVKVKQGQILEPGDEITEGSVNPHDILRIKGVEGVQTYIIKEVQRVYRLQGVDINDKHIEVISRQMLSRIKVEEAGDTELLPGSLENVFAFELANQKAIEEGGEPATGNIALLGITKASLATDSFLSAASFQETTRVLTEAAIKGKEDHLIGLKENVIIGKLIPAGTGMKRYKNIAISTETDEKLDEIEETL.

Residues C60, C62, C75, and C78 each contribute to the Zn(2+) site. The interval 299–319 (GRRGKPVTGPGNRPLKSLSDM) is disordered. Mg(2+) contacts are provided by D449, D451, and D453. Residues C790, C864, C871, and C874 each contribute to the Zn(2+) site.

Belongs to the RNA polymerase beta' chain family. In terms of assembly, the RNAP catalytic core consists of 2 alpha, 1 beta, 1 beta' and 1 omega subunit. When a sigma factor is associated with the core the holoenzyme is formed, which can initiate transcription. It depends on Mg(2+) as a cofactor. Requires Zn(2+) as cofactor.

The enzyme catalyses RNA(n) + a ribonucleoside 5'-triphosphate = RNA(n+1) + diphosphate. Its function is as follows. DNA-dependent RNA polymerase catalyzes the transcription of DNA into RNA using the four ribonucleoside triphosphates as substrates. The chain is DNA-directed RNA polymerase subunit beta' from Alkaliphilus metalliredigens (strain QYMF).